Consider the following 218-residue polypeptide: Adenylate kinase (218 aa).

10–15 (GAGKGT) serves as a coordination point for ATP. Residues 30–59 (STGDMLRAAVKAGTPLGLEAKKVMDAGGLV) form an NMP region. AMP-binding positions include T31, R36, 57 to 59 (GLV), 85 to 88 (GFPR), and Q92. The segment at 122–159 (GRRVHPASGRSYHVRFNPPKAEGVDDVTGEPLVQRDDD) is LID. ATP contacts are provided by residues R123 and 132–133 (SY). Residues R156 and R167 each contribute to the AMP site. G203 is an ATP binding site.

This sequence belongs to the adenylate kinase family. As to quaternary structure, monomer.

Its subcellular location is the cytoplasm. The enzyme catalyses AMP + ATP = 2 ADP. It functions in the pathway purine metabolism; AMP biosynthesis via salvage pathway; AMP from ADP: step 1/1. In terms of biological role, catalyzes the reversible transfer of the terminal phosphate group between ATP and AMP. Plays an important role in cellular energy homeostasis and in adenine nucleotide metabolism. In Bordetella bronchiseptica (strain ATCC BAA-588 / NCTC 13252 / RB50) (Alcaligenes bronchisepticus), this protein is Adenylate kinase.